The primary structure comprises 122 residues: Prefoldin subunit 1 (122 aa).

N-acetylalanine is present on Ala-2.

The protein belongs to the prefoldin subunit beta family. Heterohexamer of two PFD-alpha type and four PFD-beta type subunits.

Its function is as follows. Binds specifically to cytosolic chaperonin (c-CPN) and transfers target proteins to it. Binds to nascent polypeptide chain and promotes folding in an environment in which there are many competing pathways for nonnative proteins. This is Prefoldin subunit 1 (Pfdn1) from Mus musculus (Mouse).